The sequence spans 75 residues: Bacteriocin lactacin-F subunit LafA (75 aa).

The propeptide occupies 1 to 18 (MKQFNYLSHKDLAVVVGG).

It belongs to the bacteriocin class IIB family. As to quaternary structure, this bacteriocin depends upon the complementation of two peptides for activity: LafA and LafX. Associated with a 180 kDa bacteriocin complex.

Heat stable bacteriocin active against Enterococcus faecalis and other Lactobacilli. The protein is Bacteriocin lactacin-F subunit LafA (lafA) of Lactobacillus johnsonii (strain CNCM I-12250 / La1 / NCC 533).